A 923-amino-acid chain; its full sequence is Rap guanine nucleotide exchange factor 3 (923 aa).

Serine 79 carries the phosphoserine modification. A DEP domain is found at 110 to 186; the sequence is ATCPNLIRDR…RDAQFYRFPG (77 aa). The segment at 218 to 242 is interaction with PDE3B; the sequence is TVALRKPPGQRTDEELDLIFEELLH. Residues 311–314 and 321–322 contribute to the 3',5'-cyclic AMP site; these read GQLA and RA. Residues 384-518 form the N-terminal Ras-GEF domain; that stretch reads NRYTVMSGTP…EQWPERRRCH (135 aa). An interaction with PDE3B region spans residues 398–422; sequence ELLLEAMGPDSSAHDPTETFLSDFL. Phosphoserine occurs at positions 528 and 864. One can recognise a Ras-GEF domain in the interval 662-889; sequence SAKDLAGQLT…ARISTCSEQS (228 aa).

In terms of assembly, interacts with PDE3B and PIK3R6; form a signaling complex that regulates phosphatidylinositol 3-kinase gamma in angiogenesis. In terms of tissue distribution, widely expressed with highest levels in adult kidney, heart, thyroid and brain, and fetal kidney.

It localises to the endomembrane system. Guanine nucleotide exchange factor (GEF) for RAP1A and RAP2A small GTPases that is activated by binding cAMP. Through simultaneous binding of PDE3B to RAPGEF3 and PIK3R6 is assembled in a signaling complex in which it activates the PI3K gamma complex and which is involved in angiogenesis. Plays a role in the modulation of the cAMP-induced dynamic control of endothelial barrier function through a pathway that is independent on Rho-mediated signaling. Required for the actin rearrangement at cell-cell junctions, such as stress fibers and junctional actin. In Homo sapiens (Human), this protein is Rap guanine nucleotide exchange factor 3 (RAPGEF3).